The following is a 40-amino-acid chain: Probable non-specific lipid-transfer protein (40 aa).

Belongs to the plant LTP family. Phosphorylated by Ca(2+)-dependent protein kinase.

Plant non-specific lipid-transfer proteins transfer phospholipids as well as galactolipids across membranes. May play a role in wax or cutin deposition in the cell walls of expanding epidermal cells and certain secretory tissues. The polypeptide is Probable non-specific lipid-transfer protein (Triticum aestivum (Wheat)).